The chain runs to 142 residues: Small heat shock protein IbpB (142 aa).

One can recognise a sHSP domain in the interval T26 to R137.

Belongs to the small heat shock protein (HSP20) family. Homodimer. Forms homomultimers of about 100-150 subunits at optimal growth temperatures. Conformation changes to oligomers at high temperatures or high ionic concentrations. The decrease in size of the multimers is accompanied by an increase in chaperone activity.

The protein resides in the cytoplasm. In terms of biological role, associates with aggregated proteins, together with IbpA, to stabilize and protect them from irreversible denaturation and extensive proteolysis during heat shock and oxidative stress. Aggregated proteins bound to the IbpAB complex are more efficiently refolded and reactivated by the ATP-dependent chaperone systems ClpB and DnaK/DnaJ/GrpE. Its activity is ATP-independent. In Enterobacter sp. (strain 638), this protein is Small heat shock protein IbpB.